A 147-amino-acid polypeptide reads, in one-letter code: Phage-like element PBSX protein XkdM (147 aa).

The protein to B.subtilis YqbM.

The protein is Phage-like element PBSX protein XkdM (xkdM) of Bacillus subtilis (strain 168).